The primary structure comprises 318 residues: Ribosomal RNA small subunit methyltransferase H (318 aa).

Residues 38 to 40 (GGH), Asp-58, Tyr-86, Asp-107, and Gln-114 each bind S-adenosyl-L-methionine.

The protein belongs to the methyltransferase superfamily. RsmH family.

It is found in the cytoplasm. The enzyme catalyses cytidine(1402) in 16S rRNA + S-adenosyl-L-methionine = N(4)-methylcytidine(1402) in 16S rRNA + S-adenosyl-L-homocysteine + H(+). In terms of biological role, specifically methylates the N4 position of cytidine in position 1402 (C1402) of 16S rRNA. In Methylibium petroleiphilum (strain ATCC BAA-1232 / LMG 22953 / PM1), this protein is Ribosomal RNA small subunit methyltransferase H.